We begin with the raw amino-acid sequence, 387 residues long: Probable inactive shikimate kinase like 2, chloroplastic (387 aa).

The transit peptide at 1-71 (MAAFASGLAI…FNSFSCNCLS (71 aa)) directs the protein to the chloroplast. Residues 368–387 (NIKPPGWDPSSDTGPHPQFT) form a disordered region.

This sequence belongs to the shikimate kinase family.

The protein localises to the plastid. It is found in the chloroplast. This Arabidopsis thaliana (Mouse-ear cress) protein is Probable inactive shikimate kinase like 2, chloroplastic (SKL2).